An 874-amino-acid polypeptide reads, in one-letter code: Bifunctional uridylyltransferase/uridylyl-removing enzyme (874 aa).

Positions 1–336 (MIDTSTITNP…DNGKTVETIQ (336 aa)) are uridylyltransferase. The tract at residues 337-695 (LSDDFQIRGH…LSKKATRGGT (359 aa)) is uridylyl-removing. The region spanning 455–577 (VDEHSVRLIK…VRDEERLDYL (123 aa)) is the HD domain. 2 consecutive ACT domains span residues 696–779 (EVFV…RAPR) and 802–874 (TMEL…TPQD).

It belongs to the GlnD family. Requires Mg(2+) as cofactor.

It carries out the reaction [protein-PII]-L-tyrosine + UTP = [protein-PII]-uridylyl-L-tyrosine + diphosphate. It catalyses the reaction [protein-PII]-uridylyl-L-tyrosine + H2O = [protein-PII]-L-tyrosine + UMP + H(+). Its activity is regulated as follows. Uridylyltransferase (UTase) activity is inhibited by glutamine, while glutamine activates uridylyl-removing (UR) activity. Functionally, modifies, by uridylylation and deuridylylation, the PII regulatory proteins (GlnB and homologs), in response to the nitrogen status of the cell that GlnD senses through the glutamine level. Under low glutamine levels, catalyzes the conversion of the PII proteins and UTP to PII-UMP and PPi, while under higher glutamine levels, GlnD hydrolyzes PII-UMP to PII and UMP (deuridylylation). Thus, controls uridylylation state and activity of the PII proteins, and plays an important role in the regulation of nitrogen assimilation and metabolism. The protein is Bifunctional uridylyltransferase/uridylyl-removing enzyme of Photobacterium profundum (strain SS9).